Consider the following 374-residue polypeptide: Bifunctional enzyme IspD/IspF (374 aa).

The segment at 1 to 213 (MLDVTLIVLC…PCLKAPSNNF (213 aa)) is 2-C-methyl-D-erythritol 4-phosphate cytidylyltransferase. The 2-C-methyl-D-erythritol 2,4-cyclodiphosphate synthase stretch occupies residues 214–374 (FTGTGFDIHA…TLKYYNWKKR (161 aa)). Residues aspartate 220 and histidine 222 each contribute to the a divalent metal cation site. 4-CDP-2-C-methyl-D-erythritol 2-phosphate-binding positions include 220-222 (DIH) and 246-247 (HS). Residue histidine 254 participates in a divalent metal cation binding. 4-CDP-2-C-methyl-D-erythritol 2-phosphate contacts are provided by residues 268–270 (DIG), 273–277 (FPDTD), 344–347 (TTAE), phenylalanine 351, and arginine 354.

This sequence in the N-terminal section; belongs to the IspD/TarI cytidylyltransferase family. IspD subfamily. It in the C-terminal section; belongs to the IspF family. A divalent metal cation serves as cofactor.

The enzyme catalyses 2-C-methyl-D-erythritol 4-phosphate + CTP + H(+) = 4-CDP-2-C-methyl-D-erythritol + diphosphate. It carries out the reaction 4-CDP-2-C-methyl-D-erythritol 2-phosphate = 2-C-methyl-D-erythritol 2,4-cyclic diphosphate + CMP. It functions in the pathway isoprenoid biosynthesis; isopentenyl diphosphate biosynthesis via DXP pathway; isopentenyl diphosphate from 1-deoxy-D-xylulose 5-phosphate: step 2/6. Its pathway is isoprenoid biosynthesis; isopentenyl diphosphate biosynthesis via DXP pathway; isopentenyl diphosphate from 1-deoxy-D-xylulose 5-phosphate: step 4/6. Its function is as follows. Bifunctional enzyme that catalyzes the formation of 4-diphosphocytidyl-2-C-methyl-D-erythritol from CTP and 2-C-methyl-D-erythritol 4-phosphate (MEP) (IspD), and catalyzes the conversion of 4-diphosphocytidyl-2-C-methyl-D-erythritol 2-phosphate (CDP-ME2P) to 2-C-methyl-D-erythritol 2,4-cyclodiphosphate (ME-CPP) with a corresponding release of cytidine 5-monophosphate (CMP) (IspF). This is Bifunctional enzyme IspD/IspF from Aliarcobacter butzleri (strain RM4018) (Arcobacter butzleri).